The following is a 383-amino-acid chain: Chorismate synthase (383 aa).

Positions 40 and 46 each coordinate NADP(+). Residues 128–130 (RAS), glycine 291, 306–310 (KPIPT), and arginine 332 each bind FMN.

This sequence belongs to the chorismate synthase family. Homotetramer. FMNH2 serves as cofactor.

The catalysed reaction is 5-O-(1-carboxyvinyl)-3-phosphoshikimate = chorismate + phosphate. It participates in metabolic intermediate biosynthesis; chorismate biosynthesis; chorismate from D-erythrose 4-phosphate and phosphoenolpyruvate: step 7/7. Catalyzes the anti-1,4-elimination of the C-3 phosphate and the C-6 proR hydrogen from 5-enolpyruvylshikimate-3-phosphate (EPSP) to yield chorismate, which is the branch point compound that serves as the starting substrate for the three terminal pathways of aromatic amino acid biosynthesis. This reaction introduces a second double bond into the aromatic ring system. The chain is Chorismate synthase from Moorella thermoacetica (strain ATCC 39073 / JCM 9320).